The following is a 131-amino-acid chain: Snaclec alboaggregin-A subunit alpha (131 aa).

The C-type lectin domain maps to 1–131 (DCPSDWSSYD…EYPFVCKFXR (131 aa)). 3 disulfides stabilise this stretch: Cys-2/Cys-13, Cys-30/Cys-127, and Cys-102/Cys-119.

This sequence belongs to the snaclec family. In terms of assembly, heterotetramer of the subunits alpha, alpha', beta and beta'; disulfide-linked. As to expression, expressed by the venom gland.

It is found in the secreted. In terms of biological role, potent platelet activator that aggregates platelets via both GPIbalpha (GP1BA) and GPVI (GP6). Induces a tyrosine phosphorylation profile in platelets that resembles this produced by collagen, involving the time dependent tyrosine phosphorylation of Fc receptor gamma chain (FCGR1A), phospholipase Cgamma2 (PLCG2), and LAT. The polypeptide is Snaclec alboaggregin-A subunit alpha (Trimeresurus albolabris (White-lipped pit viper)).